The chain runs to 217 residues: MQFFADTAEIDDIKELAATGLLDGVTTNPSLIHKSGRDFIEVTKEICGITDGPVSAEVVALDHATMMKEADKLRAIADNVCIKVPLTIDGLKTCKALSDDGTMVNVTLCFSANQALLAAKAGATFVSPFVGRHDDNGFNGMELIRDIRTIYDNYAFETEILVASVRHTTHVLEAALIGADVMTAPPKVIMALANHVLTNKGIEGFLKDWEATGQSIL.

The active-site Schiff-base intermediate with substrate is Lys-83.

The protein belongs to the transaldolase family. Type 3B subfamily.

It localises to the cytoplasm. The catalysed reaction is D-sedoheptulose 7-phosphate + D-glyceraldehyde 3-phosphate = D-erythrose 4-phosphate + beta-D-fructose 6-phosphate. The protein operates within carbohydrate degradation; pentose phosphate pathway; D-glyceraldehyde 3-phosphate and beta-D-fructose 6-phosphate from D-ribose 5-phosphate and D-xylulose 5-phosphate (non-oxidative stage): step 2/3. In terms of biological role, transaldolase is important for the balance of metabolites in the pentose-phosphate pathway. The polypeptide is Probable transaldolase (Erythrobacter litoralis (strain HTCC2594)).